The primary structure comprises 334 residues: Glycerol-3-phosphate dehydrogenase [NAD(P)+] (334 aa).

The NADPH site is built by Ser-14, Tyr-15, His-35, and Lys-109. The sn-glycerol 3-phosphate site is built by Lys-109, Gly-138, and Thr-140. An NADPH-binding site is contributed by Ala-142. Residues Lys-194, Asp-247, Ser-257, Arg-258, and Asn-259 each coordinate sn-glycerol 3-phosphate. Lys-194 serves as the catalytic Proton acceptor. Arg-258 lines the NADPH pocket. Val-282 and Glu-284 together coordinate NADPH.

It belongs to the NAD-dependent glycerol-3-phosphate dehydrogenase family.

It is found in the cytoplasm. It carries out the reaction sn-glycerol 3-phosphate + NAD(+) = dihydroxyacetone phosphate + NADH + H(+). The catalysed reaction is sn-glycerol 3-phosphate + NADP(+) = dihydroxyacetone phosphate + NADPH + H(+). The protein operates within membrane lipid metabolism; glycerophospholipid metabolism. Functionally, catalyzes the reduction of the glycolytic intermediate dihydroxyacetone phosphate (DHAP) to sn-glycerol 3-phosphate (G3P), the key precursor for phospholipid synthesis. This Aeromonas hydrophila subsp. hydrophila (strain ATCC 7966 / DSM 30187 / BCRC 13018 / CCUG 14551 / JCM 1027 / KCTC 2358 / NCIMB 9240 / NCTC 8049) protein is Glycerol-3-phosphate dehydrogenase [NAD(P)+].